The following is a 234-amino-acid chain: DNA repair protein RecO (234 aa).

Belongs to the RecO family.

Functionally, involved in DNA repair and RecF pathway recombination. The sequence is that of DNA repair protein RecO from Alteromonas mediterranea (strain DSM 17117 / CIP 110805 / LMG 28347 / Deep ecotype).